The primary structure comprises 262 residues: Enoyl-[acyl-carrier-protein] reductase [NADH] FabI (262 aa).

Residues Gly15, 21 to 22 (SI), Gln42, 66 to 67 (DV), and Met94 each bind NAD(+). Residue Ser97 coordinates substrate. Residues Tyr147 and Tyr157 each act as proton acceptor in the active site. Residues Lys164 and 193–197 (IKTLS) each bind NAD(+).

Belongs to the short-chain dehydrogenases/reductases (SDR) family. FabI subfamily. In terms of assembly, homotetramer.

It catalyses the reaction a 2,3-saturated acyl-[ACP] + NAD(+) = a (2E)-enoyl-[ACP] + NADH + H(+). Its pathway is lipid metabolism; fatty acid biosynthesis. Catalyzes the reduction of a carbon-carbon double bond in an enoyl moiety that is covalently linked to an acyl carrier protein (ACP). Involved in the elongation cycle of fatty acid which are used in the lipid metabolism. This Rickettsia bellii (strain RML369-C) protein is Enoyl-[acyl-carrier-protein] reductase [NADH] FabI (fabI).